A 368-amino-acid polypeptide reads, in one-letter code: DNA integrity scanning protein DisA (368 aa).

In terms of domain architecture, DAC spans 15-153 (DERLRATLAA…DGRRHVLDEP (139 aa)). ATP contacts are provided by residues Gly82, Leu100, and 113–117 (TRHRS). The tract at residues 101 to 121 (QPDPSIPTNESGTRHRSAERT) is disordered. The segment covering 112–121 (GTRHRSAERT) has biased composition (basic and acidic residues).

It belongs to the DisA family. As to quaternary structure, homooctamer. Mg(2+) serves as cofactor.

The catalysed reaction is 2 ATP = 3',3'-c-di-AMP + 2 diphosphate. Its function is as follows. Participates in a DNA-damage check-point. DisA forms globular foci that rapidly scan along the chromosomes searching for lesions. In terms of biological role, also has diadenylate cyclase activity, catalyzing the condensation of 2 ATP molecules into cyclic di-AMP (c-di-AMP). c-di-AMP likely acts as a signaling molecule that may couple DNA integrity with a cellular process. The protein is DNA integrity scanning protein DisA of Acidothermus cellulolyticus (strain ATCC 43068 / DSM 8971 / 11B).